Reading from the N-terminus, the 227-residue chain is Uracil-DNA glycosylase (227 aa).

D65 serves as the catalytic Proton acceptor.

This sequence belongs to the uracil-DNA glycosylase (UDG) superfamily. UNG family.

Its subcellular location is the cytoplasm. The enzyme catalyses Hydrolyzes single-stranded DNA or mismatched double-stranded DNA and polynucleotides, releasing free uracil.. Its function is as follows. Excises uracil residues from the DNA which can arise as a result of misincorporation of dUMP residues by DNA polymerase or due to deamination of cytosine. The polypeptide is Uracil-DNA glycosylase (Bacillus velezensis (strain DSM 23117 / BGSC 10A6 / LMG 26770 / FZB42) (Bacillus amyloliquefaciens subsp. plantarum)).